The sequence spans 163 residues: Small heat shock protein C4 (163 aa).

The sHSP domain maps to 53-163 (YNNKILSPRT…QSKAKKIKIS (111 aa)).

This sequence belongs to the small heat shock protein (HSP20) family.

The polypeptide is Small heat shock protein C4 (hspc4-1) (Rickettsia felis (strain ATCC VR-1525 / URRWXCal2) (Rickettsia azadi)).